The primary structure comprises 528 residues: Beta-hexosaminidase subunit alpha (528 aa).

The signal sequence occupies residues 1–22 (MAGCRLWVSLLLAAALACLATA). A propeptide spanning residues 23 to 88 (LWPWPQYIQT…PRPSFSKKQQ (66 aa)) is cleaved from the precursor. Residues C58 and C104 are joined by a disulfide bond. N-linked (GlcNAc...) asparagine glycans are attached at residues N115, N157, and N295. A disulfide bond links C277 and C328. E323 functions as the Proton donor in the catalytic mechanism. The interval 422–423 (NR) is critical for hydrolysis GM2 gangliosides. N-linked (GlcNAc...) asparagine glycosylation occurs at N487. A disulfide bond links C504 and C521.

It belongs to the glycosyl hydrolase 20 family. There are 3 beta-hexosaminidase isozymes: isozyme A (hexosaminidase A) is a heterodimer composed of one subunit alpha and one subunit beta (chain A and B); isozyme B (hexosaminidase B) is a homodimer of two beta subunits (two chains A and B); isozyme S (hexosaminidase S) is a homodimer of two alpha subunits. The composition of the dimer (isozyme A versus isozyme S) has a significant effect on the substrate specificity of the alpha subunit active site.

It is found in the lysosome. The catalysed reaction is Hydrolysis of terminal non-reducing N-acetyl-D-hexosamine residues in N-acetyl-beta-D-hexosaminides.. It catalyses the reaction N-acetyl-beta-D-galactosaminyl-(1-&gt;4)-beta-D-3-sulfogalactosyl-(1-&gt;4)-beta-D-glucosyl-(1&lt;-&gt;1')-ceramide + H2O = a beta-D-3-sulfogalactosyl-(1-&gt;4)-beta-D-glucosyl-(1&lt;-&gt;1')-ceramide + N-acetyl-beta-D-galactosamine. It carries out the reaction a ganglioside GM2 (d18:1(4E)) + H2O = a ganglioside GM3 (d18:1(4E)) + N-acetyl-beta-D-galactosamine. The enzyme catalyses a ganglioside GM2 + H2O = a ganglioside GM3 + N-acetyl-beta-D-galactosamine. The catalysed reaction is beta-D-GalNAc-(1-&gt;4)-alpha-L-IdoA-(1-&gt;3)-beta-D-GalNAc-4-sulfate-(1-&gt;4)-alpha-L-IdoA-(1-&gt;3)-D-GalNAc-4-sulfate + H2O = alpha-L-IdoA-(1-&gt;3)-beta-D-GalNAc-4-sulfate-(1-&gt;4)-alpha-L-IdoA-(1-&gt;3)-D-GalNAc-4-sulfate + N-acetyl-D-galactosamine. It catalyses the reaction N-acetyl-beta-D-6-sulfogalactosaminyl-(1-&gt;4)-alpha-L-iduronyl-(1-&gt;3)-N-acetyl-D-6-sulfogalactosamine + H2O = alpha-L-iduronyl-(1-&gt;3)-N-acetyl-D-6-sulfogalactosamine + N-acetyl-D-6-sulfogalactosamine. With respect to regulation, addition of GM2A stimulates the hydrolysis of sulfated glycosphingolipid SM2 and the ganglioside GM2. Functionally, hydrolyzes the non-reducing end N-acetyl-D-hexosamine and/or sulfated N-acetyl-D-hexosamine of glycoconjugates, such as the oligosaccharide moieties from proteins and neutral glycolipids, or from certain mucopolysaccharides. The isozyme S is as active as the isozyme A on the anionic bis-sulfated glycans, the chondroitin-6-sulfate trisaccharide (C6S-3), and the dermatan sulfate pentasaccharide, and the sulfated glycosphingolipid SM2. The isozyme B does not hydrolyze each of these substrates, however hydrolyzes efficiently neutral oligosaccharide. Only the isozyme A is responsible for the degradation of GM2 gangliosides in the presence of GM2A. The sequence is that of Beta-hexosaminidase subunit alpha from Rattus norvegicus (Rat).